The chain runs to 199 residues: Putative 3-methyladenine DNA glycosylase (199 aa).

It belongs to the DNA glycosylase MPG family.

This Chlorobium phaeobacteroides (strain BS1) protein is Putative 3-methyladenine DNA glycosylase.